The following is a 433-amino-acid chain: Adenylosuccinate synthetase (433 aa).

Residues 11–17 and 39–41 each bind GTP; these read GDEGKGK and GHT. Asp-12 (proton acceptor) is an active-site residue. Residues Asp-12 and Gly-39 each coordinate Mg(2+). IMP-binding positions include 12-15, 37-40, Thr-134, Arg-148, Asn-230, Thr-245, and Arg-309; these read DEGK and NAGH. His-40 serves as the catalytic Proton donor. 305-311 contributes to the substrate binding site; that stretch reads VTTGRKR. Residues Arg-311, 337–339, and 419–421 each bind GTP; these read KLD and GTG.

The protein belongs to the adenylosuccinate synthetase family. Homodimer. It depends on Mg(2+) as a cofactor.

The protein resides in the cytoplasm. The enzyme catalyses IMP + L-aspartate + GTP = N(6)-(1,2-dicarboxyethyl)-AMP + GDP + phosphate + 2 H(+). Its pathway is purine metabolism; AMP biosynthesis via de novo pathway; AMP from IMP: step 1/2. Plays an important role in the de novo pathway and in the salvage pathway of purine nucleotide biosynthesis. Catalyzes the first committed step in the biosynthesis of AMP from IMP. The chain is Adenylosuccinate synthetase from Saccharomyces cerevisiae (strain Lalvin EC1118 / Prise de mousse) (Baker's yeast).